Here is a 226-residue protein sequence, read N- to C-terminus: Uridylate kinase (226 aa).

Lys-6–Lys-10 serves as a coordination point for ATP. Gly-43 is a binding site for UMP. The ATP site is built by Gly-44 and Arg-48. Residues Asp-65 and Phe-113–Thr-119 contribute to the UMP site. 4 residues coordinate ATP: Thr-139, Asn-140, Tyr-145, and Asp-148.

The protein belongs to the UMP kinase family. Homohexamer.

Its subcellular location is the cytoplasm. The catalysed reaction is UMP + ATP = UDP + ADP. The protein operates within pyrimidine metabolism; CTP biosynthesis via de novo pathway; UDP from UMP (UMPK route): step 1/1. Inhibited by UTP. Functionally, catalyzes the reversible phosphorylation of UMP to UDP. This is Uridylate kinase from Saccharolobus islandicus (strain M.16.27) (Sulfolobus islandicus).